A 76-amino-acid polypeptide reads, in one-letter code: Sec-independent protein translocase protein TatA (76 aa).

A helical membrane pass occupies residues 1–21 (MGGISIWQLLIIALIVVLLFG). The segment at 43 to 76 (MSSEDEKKAIEDTSAEKTAQTEEKKTESKDKEQA) is disordered. Residues 46–76 (EDEKKAIEDTSAEKTAQTEEKKTESKDKEQA) show a composition bias toward basic and acidic residues.

This sequence belongs to the TatA/E family. The Tat system comprises two distinct complexes: a TatABC complex, containing multiple copies of TatA, TatB and TatC subunits, and a separate TatA complex, containing only TatA subunits. Substrates initially bind to the TatABC complex, which probably triggers association of the separate TatA complex to form the active translocon.

The protein localises to the cell inner membrane. In terms of biological role, part of the twin-arginine translocation (Tat) system that transports large folded proteins containing a characteristic twin-arginine motif in their signal peptide across membranes. TatA could form the protein-conducting channel of the Tat system. This is Sec-independent protein translocase protein TatA from Shewanella loihica (strain ATCC BAA-1088 / PV-4).